Consider the following 140-residue polypeptide: Nucleoside diphosphate kinase (140 aa).

ATP contacts are provided by Lys11, Phe59, Arg87, Thr93, Arg104, and Asn114. His117 serves as the catalytic Pros-phosphohistidine intermediate.

This sequence belongs to the NDK family. Homotetramer. Requires Mg(2+) as cofactor.

The protein localises to the cytoplasm. The enzyme catalyses a 2'-deoxyribonucleoside 5'-diphosphate + ATP = a 2'-deoxyribonucleoside 5'-triphosphate + ADP. It carries out the reaction a ribonucleoside 5'-diphosphate + ATP = a ribonucleoside 5'-triphosphate + ADP. Major role in the synthesis of nucleoside triphosphates other than ATP. The ATP gamma phosphate is transferred to the NDP beta phosphate via a ping-pong mechanism, using a phosphorylated active-site intermediate. This is Nucleoside diphosphate kinase from Rickettsia bellii (strain OSU 85-389).